A 188-amino-acid polypeptide reads, in one-letter code: uncharacterized protein (188 aa).

The protein belongs to the isochorismatase family.

This is an uncharacterized protein from Escherichia coli O157:H7.